The primary structure comprises 371 residues: Histidinol-phosphate aminotransferase (371 aa).

The residue at position 228 (Lys228) is an N6-(pyridoxal phosphate)lysine.

This sequence belongs to the class-II pyridoxal-phosphate-dependent aminotransferase family. Histidinol-phosphate aminotransferase subfamily. Requires pyridoxal 5'-phosphate as cofactor.

It carries out the reaction L-histidinol phosphate + 2-oxoglutarate = 3-(imidazol-4-yl)-2-oxopropyl phosphate + L-glutamate. Its pathway is amino-acid biosynthesis; L-histidine biosynthesis; L-histidine from 5-phospho-alpha-D-ribose 1-diphosphate: step 7/9. This is Histidinol-phosphate aminotransferase from Methanococcus maripaludis (strain C5 / ATCC BAA-1333).